We begin with the raw amino-acid sequence, 172 residues long: Stellate protein CG33236/CG33240/CG33244/CG33245 (172 aa).

It belongs to the casein kinase 2 subunit beta family. As to quaternary structure, interacts in vitro with the casein kinase 2 alpha subunit (CkII-alpha). The relevance of such interaction is however unclear in vivo. Probably not expressed in wild-type flies. In males lacking the Y chromosome, it is testis-specific and constitutes the main component of star-shaped crystals.

Functionally, unknown. In males lacking the Y chromosome, its strong overexpression leads to the appearance of proteinaceous star-shaped crystals in the primary spermatocytes causing meiotic drive, possibly by interfering with normal casein kinase 2 activity. This is Stellate protein CG33236/CG33240/CG33244/CG33245 (Ste:CG33236) from Drosophila melanogaster (Fruit fly).